Here is a 192-residue protein sequence, read N- to C-terminus: 7-methyl-GTP pyrophosphatase (192 aa).

Asp69 acts as the Proton acceptor in catalysis.

It belongs to the Maf family. YceF subfamily. Requires a divalent metal cation as cofactor.

The protein localises to the cytoplasm. The enzyme catalyses N(7)-methyl-GTP + H2O = N(7)-methyl-GMP + diphosphate + H(+). Functionally, nucleoside triphosphate pyrophosphatase that hydrolyzes 7-methyl-GTP (m(7)GTP). May have a dual role in cell division arrest and in preventing the incorporation of modified nucleotides into cellular nucleic acids. This is 7-methyl-GTP pyrophosphatase from Methylobacillus flagellatus (strain ATCC 51484 / DSM 6875 / VKM B-1610 / KT).